The primary structure comprises 193 residues: Xanthine phosphoribosyltransferase (193 aa).

Positions 20 and 27 each coordinate xanthine. 5-phospho-alpha-D-ribose 1-diphosphate is bound at residue 129 to 133; sequence ANGKA. Residue lysine 157 participates in xanthine binding.

Belongs to the purine/pyrimidine phosphoribosyltransferase family. Xpt subfamily. In terms of assembly, homodimer.

It localises to the cytoplasm. It catalyses the reaction XMP + diphosphate = xanthine + 5-phospho-alpha-D-ribose 1-diphosphate. It functions in the pathway purine metabolism; XMP biosynthesis via salvage pathway; XMP from xanthine: step 1/1. Converts the preformed base xanthine, a product of nucleic acid breakdown, to xanthosine 5'-monophosphate (XMP), so it can be reused for RNA or DNA synthesis. The chain is Xanthine phosphoribosyltransferase from Bifidobacterium animalis subsp. lactis (strain AD011).